The primary structure comprises 166 residues: MSEPTSRRPAYARLLDRAVRILAVRDHSEQELRRKLSAPVMGKNGPEEIDATADDYERVIAWFHEHHYLDDERFVMRFIASRSRKGYGPARIRQELNQKGISRESTEKAMRECEIDWSEMAREQAVRKYGEPLPSNFSEKVKVQRFLLYRGYLMDDIQQIWRNFAD.

Belongs to the RecX family.

It localises to the cytoplasm. Functionally, modulates RecA activity. The sequence is that of Regulatory protein RecX from Salmonella paratyphi A (strain ATCC 9150 / SARB42).